A 326-amino-acid chain; its full sequence is Phenylserine dehydratase (326 aa).

In terms of assembly, monomer. Pyridoxal 5'-phosphate serves as cofactor.

The enzyme catalyses L-threo-3-phenylserine = 3-phenylpyruvate + NH4(+). Its activity is regulated as follows. Inhibited by phenylhydrazine, hydroxylamine, p-chloromercuribenzoate, and HgCl(2). The chain is Phenylserine dehydratase from Ralstonia pickettii (Burkholderia pickettii).